The following is an 80-amino-acid chain: Exodeoxyribonuclease 7 small subunit (80 aa).

This sequence belongs to the XseB family. Heterooligomer composed of large and small subunits.

Its subcellular location is the cytoplasm. It catalyses the reaction Exonucleolytic cleavage in either 5'- to 3'- or 3'- to 5'-direction to yield nucleoside 5'-phosphates.. Its function is as follows. Bidirectionally degrades single-stranded DNA into large acid-insoluble oligonucleotides, which are then degraded further into small acid-soluble oligonucleotides. The protein is Exodeoxyribonuclease 7 small subunit of Vibrio atlanticus (strain LGP32) (Vibrio splendidus (strain Mel32)).